Consider the following 205-residue polypeptide: uncharacterized protein (205 aa).

An HD domain is found at 26 to 129; sequence DWHHVSRVAD…VQDADRLDAI (104 aa).

This is an uncharacterized protein from Bacillus subtilis (strain 168).